The sequence spans 370 residues: Mitochondrial carrier protein SCaMC-3L (370 aa).

Solcar repeat units follow at residues 90-176, 184-269, and 280-367; these read EALW…CKNY, PPFQ…LQCF, and PSGL…MKKT. Helical transmembrane passes span 96-113, 151-170, 194-207, 245-263, 282-306, and 342-361; these read LLSGAMAGAVSRTGTAPL, GNGINVLKIAPEYAIKFSVF, SLAVAISQTLINPM, YLPNMLGIIPYACTDLAVY, GLVSLSSVTLSTTCGQMASYPLTLV, and GMTPTLLKVLPAGGISYVVY.

The protein belongs to the mitochondrial carrier (TC 2.A.29) family.

The protein localises to the mitochondrion inner membrane. The catalysed reaction is Mg(2+)(out) + phosphate(in) + ATP(out) = Mg(2+)(in) + phosphate(out) + ATP(in). The enzyme catalyses ADP(out) + phosphate(in) + H(+)(out) = ADP(in) + phosphate(out) + H(+)(in). In terms of biological role, calcium-independent ATP-Mg/Pi exchanger that catalyzes the electroneutral exchange of Mg-ATP or free ADP against an hydrogenphosphate and participates in the net transport of adenine nucleotides across the mitochondria inner membrane. This chain is Mitochondrial carrier protein SCaMC-3L, found in Homo sapiens (Human).